A 316-amino-acid chain; its full sequence is Cytochrome c biogenesis protein CcsA (316 aa).

The next 8 membrane-spanning stretches (helical) occupy residues 12–32, 44–64, 71–91, 98–118, 145–165, 222–242, 256–270, and 283–303; these read HISL…LLVY, GMVA…IYSG, LYES…IPYF, LNVL…SGVL, LSYA…VILF, VISL…VWAN, TWAF…IYLH, and AIVA…VNLL.

This sequence belongs to the CcmF/CycK/Ccl1/NrfE/CcsA family. As to quaternary structure, may interact with Ccs1.

Its subcellular location is the plastid. The protein resides in the chloroplast thylakoid membrane. Functionally, required during biogenesis of c-type cytochromes (cytochrome c6 and cytochrome f) at the step of heme attachment. This Ranunculus macranthus (Large buttercup) protein is Cytochrome c biogenesis protein CcsA.